The chain runs to 213 residues: Putative 3-methyladenine DNA glycosylase (213 aa).

Belongs to the DNA glycosylase MPG family.

This is Putative 3-methyladenine DNA glycosylase from Leifsonia xyli subsp. xyli (strain CTCB07).